Reading from the N-terminus, the 77-residue chain is Conotoxin ArMSGL-0141 (77 aa).

Positions 1–18 (MSGLGILVLTLLLLVYMA) are cleaved as a signal peptide. The propeptide occupies 19–44 (TSHQDAGEKQATQRDAINVRRRRSLT). Intrachain disulfides connect cysteine 51–cysteine 63, cysteine 55–cysteine 71, and cysteine 62–cysteine 75. Phenylalanine 76 bears the Phenylalanine amide mark.

Belongs to the conotoxin O3 superfamily. Expressed by the venom duct.

The protein localises to the secreted. The protein is Conotoxin ArMSGL-0141 of Conus arenatus (Sand-dusted cone).